We begin with the raw amino-acid sequence, 485 residues long: Adenosylhomocysteinase 1 (485 aa).

Positions 64, 139, and 205 each coordinate substrate. Residue 206–208 (TTT) coordinates NAD(+). 2 residues coordinate substrate: Lys-235 and Asp-239. NAD(+) is bound by residues 271–276 (GDVGKG), Glu-292, 348–350 (IGH), Asn-397, His-404, Lys-479, 479–483 (KPPHY), and Tyr-483.

The protein belongs to the adenosylhomocysteinase family. Homotetramer. Requires NAD(+) as cofactor.

It carries out the reaction S-adenosyl-L-homocysteine + H2O = L-homocysteine + adenosine. It functions in the pathway amino-acid biosynthesis; L-homocysteine biosynthesis; L-homocysteine from S-adenosyl-L-homocysteine: step 1/1. Its function is as follows. Essential protein during embryogenesis. Adenosylhomocysteine is a competitive inhibitor of S-adenosyl-L-methionine-dependent methyl transferase reactions; therefore adenosylhomocysteinase may play a key role in the control of methylations via regulation of the intracellular concentration of adenosylhomocysteine. Required for DNA methylation-dependent gene silencing. In Arabidopsis thaliana (Mouse-ear cress), this protein is Adenosylhomocysteinase 1.